A 69-amino-acid polypeptide reads, in one-letter code: Putative membrane protein insertion efficiency factor (69 aa).

Belongs to the UPF0161 family.

The protein resides in the cell inner membrane. Could be involved in insertion of integral membrane proteins into the membrane. The protein is Putative membrane protein insertion efficiency factor of Syntrophotalea carbinolica (strain DSM 2380 / NBRC 103641 / GraBd1) (Pelobacter carbinolicus).